The sequence spans 117 residues: MANTLDVANNLEQALRESDEFKSLKEAYEAVMGEPTAKQMFENFRDTQLSLQEKQMQGIEITEEEVEKARQVVETVQQHEGISKLMEEEQRLNNLINEISQIITKPLEDLYGTAEQN.

It belongs to the UPF0342 family.

In Oceanobacillus iheyensis (strain DSM 14371 / CIP 107618 / JCM 11309 / KCTC 3954 / HTE831), this protein is UPF0342 protein OB1136.